A 458-amino-acid polypeptide reads, in one-letter code: UDP-N-acetylmuramoylalanine--D-glutamate ligase (458 aa).

124–130 (GSDGKTT) lines the ATP pocket.

It belongs to the MurCDEF family.

The protein resides in the cytoplasm. The catalysed reaction is UDP-N-acetyl-alpha-D-muramoyl-L-alanine + D-glutamate + ATP = UDP-N-acetyl-alpha-D-muramoyl-L-alanyl-D-glutamate + ADP + phosphate + H(+). It functions in the pathway cell wall biogenesis; peptidoglycan biosynthesis. Functionally, cell wall formation. Catalyzes the addition of glutamate to the nucleotide precursor UDP-N-acetylmuramoyl-L-alanine (UMA). The protein is UDP-N-acetylmuramoylalanine--D-glutamate ligase of Clostridium botulinum (strain Langeland / NCTC 10281 / Type F).